Here is a 438-residue protein sequence, read N- to C-terminus: sn-glycerol-3-phosphate-binding periplasmic protein UgpB (438 aa).

The first 23 residues, Met1–Ala23, serve as a signal peptide directing secretion. Residues Tyr65, Glu89, Ser144, Ser270, Gly307, Tyr346, and Arg397 each coordinate sn-glycerol 3-phosphate.

Belongs to the bacterial solute-binding protein 1 family. In terms of assembly, the complex is composed of two ATP-binding proteins (UgpC), two transmembrane proteins (UgpA and UgpE) and a solute-binding protein (UgpB).

Its subcellular location is the periplasm. Part of the ABC transporter complex UgpBAEC involved in sn-glycerol-3-phosphate (G3P) import. Binds G3P. This is sn-glycerol-3-phosphate-binding periplasmic protein UgpB (ugpB) from Escherichia coli O6:K15:H31 (strain 536 / UPEC).